Here is a 115-residue protein sequence, read N- to C-terminus: Small ribosomal subunit protein uS13 (115 aa).

Residues 92-115 are disordered; that stretch reads RRGLPVRGQNTKNNARTRKGSKRK. The segment covering 106–115 has biased composition (basic residues); sequence ARTRKGSKRK.

Belongs to the universal ribosomal protein uS13 family. In terms of assembly, part of the 30S ribosomal subunit. Forms a loose heterodimer with protein S19. Forms two bridges to the 50S subunit in the 70S ribosome.

Functionally, located at the top of the head of the 30S subunit, it contacts several helices of the 16S rRNA. In the 70S ribosome it contacts the 23S rRNA (bridge B1a) and protein L5 of the 50S subunit (bridge B1b), connecting the 2 subunits; these bridges are implicated in subunit movement. Contacts the tRNAs in the A and P-sites. The sequence is that of Small ribosomal subunit protein uS13 from Lactobacillus gasseri (strain ATCC 33323 / DSM 20243 / BCRC 14619 / CIP 102991 / JCM 1131 / KCTC 3163 / NCIMB 11718 / NCTC 13722 / AM63).